The primary structure comprises 347 residues: MSARAAPSRRRQAGRRLRYLPTGSFPFLLLLLLLCIQLGGGQKKKENLLAEKVEQLMEWSSRRSIFRMNGDKFRKFVKAPPRNYSMIVMFTALQPQRQCSVCRQANEEYQILANSWRYSSAFCNKLFFGMVDYDEGTDVFQQLNMNSAPTFMHFPSKGRPKRADTFDLQRIGFAAEQLAKWIADRTDVHIRVFRPPNYSGTIALALLVSLVGGLLYLRRNNLEFIYNKTGWAMVSLCIVFAMTSGQMWNHIRGPPYAHKNPHNGQVSYIHGSSQAQFVAESHIILVLNAAITMGMVLLNEAATSKGDVGKRRIICLVGLGLVVFFFSFLLSIFRSKYHGYPYSFLIK.

Positions 1 to 41 (MSARAAPSRRRQAGRRLRYLPTGSFPFLLLLLLLCIQLGGG) are cleaved as a signal peptide. The Lumenal segment spans residues 42–196 (QKKKENLLAE…DVHIRVFRPP (155 aa)). In terms of domain architecture, Thioredoxin spans 59–187 (WSSRRSIFRM…LAKWIADRTD (129 aa)). N-linked (GlcNAc...) asparagine glycosylation is present at Asn-83. A disulfide bridge connects residues Cys-99 and Cys-102. Residues 197–217 (NYSGTIALALLVSLVGGLLYL) traverse the membrane as a helical segment. Residues 218-221 (RRNN) are Cytoplasmic-facing. Residues 222-242 (LEFIYNKTGWAMVSLCIVFAM) form a helical membrane-spanning segment. At 243–276 (TSGQMWNHIRGPPYAHKNPHNGQVSYIHGSSQAQ) the chain is on the lumenal side. The chain crosses the membrane as a helical span at residues 277–297 (FVAESHIILVLNAAITMGMVL). At 298–312 (LNEAATSKGDVGKRR) the chain is on the cytoplasmic side. Residues 313–333 (IICLVGLGLVVFFFSFLLSIF) form a helical membrane-spanning segment. Over 334–347 (RSKYHGYPYSFLIK) the chain is Lumenal.

The protein belongs to the OST3/OST6 family. In terms of assembly, accessory component of the STT3B-containing form of the oligosaccharyltransferase (OST) complex. OST exists in two different complex forms which contain common core subunits RPN1, RPN2, OST48, OST4, DAD1 and TMEM258, either STT3A or STT3B as catalytic subunits, and form-specific accessory subunits. OST can form stable complexes with the Sec61 complex or with both the Sec61 and TRAP complexes. The association of TUSC3 or MAGT1 with the STT3B-containing complex seems to be mutually exclusvice.

Its subcellular location is the endoplasmic reticulum membrane. It functions in the pathway protein modification; protein glycosylation. Acts as accessory component of the N-oligosaccharyl transferase (OST) complex which catalyzes the transfer of a high mannose oligosaccharide from a lipid-linked oligosaccharide donor to an asparagine residue within an Asn-X-Ser/Thr consensus motif in nascent polypeptide chains. Involved in N-glycosylation of STT3B-dependent substrates. Specifically required for the glycosylation of a subset of acceptor sites that are near cysteine residues; in this function seems to act redundantly with MAGT1. In its oxidized form proposed to form transient mixed disulfides with a glycoprotein substrate to facilitate access of STT3B to the unmodified acceptor site. Also has oxidoreductase-independent functions in the STT3B-containing OST complex possibly involving substrate recognition. Could indirectly play a role in Mg(2+) transport. The protein is Dolichyl-diphosphooligosaccharide--protein glycosyltransferase subunit TUSC3 (Tusc3) of Mus musculus (Mouse).